Consider the following 260-residue polypeptide: Indole-3-glycerol phosphate synthase (260 aa).

The protein belongs to the TrpC family.

The enzyme catalyses 1-(2-carboxyphenylamino)-1-deoxy-D-ribulose 5-phosphate + H(+) = (1S,2R)-1-C-(indol-3-yl)glycerol 3-phosphate + CO2 + H2O. It functions in the pathway amino-acid biosynthesis; L-tryptophan biosynthesis; L-tryptophan from chorismate: step 4/5. The protein is Indole-3-glycerol phosphate synthase of Staphylococcus aureus (strain Mu3 / ATCC 700698).